Consider the following 236-residue polypeptide: Rab-like protein 3 (236 aa).

The segment at Met-1 to Cys-235 is small GTPase-like. Residues Gly-16–Ser-21, Lys-148–Asp-150, and Asp-179–Cys-180 each bind GTP.

The protein belongs to the small GTPase superfamily. Rab family. In terms of assembly, homodimer. Interacts with GPR89; the interaction stabilizes GPR89. Interacts with RAP1GDS1.

Its function is as follows. Required for KRAS signaling regulation and modulation of cell proliferation. Regulator of KRAS prenylation, and probably prenylation of other small GTPases. Required for lymphocyte development and function. Not required for myeloid cell development. The polypeptide is Rab-like protein 3 (Rabl3) (Mus musculus (Mouse)).